A 458-amino-acid chain; its full sequence is Argininosuccinate lyase (458 aa).

It belongs to the lyase 1 family. Argininosuccinate lyase subfamily.

The protein localises to the cytoplasm. It catalyses the reaction 2-(N(omega)-L-arginino)succinate = fumarate + L-arginine. It participates in amino-acid biosynthesis; L-arginine biosynthesis; L-arginine from L-ornithine and carbamoyl phosphate: step 3/3. This Pseudoalteromonas atlantica (strain T6c / ATCC BAA-1087) protein is Argininosuccinate lyase.